A 263-amino-acid chain; its full sequence is tRNA1(Val) (adenine(37)-N6)-methyltransferase (263 aa).

Belongs to the methyltransferase superfamily. tRNA (adenine-N(6)-)-methyltransferase family.

It is found in the cytoplasm. The enzyme catalyses adenosine(37) in tRNA1(Val) + S-adenosyl-L-methionine = N(6)-methyladenosine(37) in tRNA1(Val) + S-adenosyl-L-homocysteine + H(+). Its function is as follows. Specifically methylates the adenine in position 37 of tRNA(1)(Val) (anticodon cmo5UAC). This Salmonella choleraesuis (strain SC-B67) protein is tRNA1(Val) (adenine(37)-N6)-methyltransferase.